A 255-amino-acid polypeptide reads, in one-letter code: Probable transcriptional regulatory protein PCC8801_2028 (255 aa).

Belongs to the TACO1 family.

The protein resides in the cytoplasm. The protein is Probable transcriptional regulatory protein PCC8801_2028 of Rippkaea orientalis (strain PCC 8801 / RF-1) (Cyanothece sp. (strain PCC 8801)).